The chain runs to 254 residues: Transcription factor bHLH51 (254 aa).

Residues 62–111 form the bHLH domain; that stretch reads SLSRSHRLAEKRRRDRINSHLTALRKLVPNSDKLDKAALLATVIEQVKEL.

In terms of assembly, homodimer. In terms of tissue distribution, expressed constitutively in roots, stems, and flowers.

The protein resides in the nucleus. This Arabidopsis thaliana (Mouse-ear cress) protein is Transcription factor bHLH51 (BHLH51).